A 399-amino-acid chain; its full sequence is Proteinase-activated receptor 2 (399 aa).

The N-terminal stretch at 1-25 (MRSLSLAWLLGGITLLAASVSCSRT) is a signal peptide. A propeptide spans 26 to 38 (ENLAPGRNNSKGR) (removed for receptor activation). An N-linked (GlcNAc...) asparagine glycan is attached at asparagine 33. Topologically, residues 39–73 (SLIGRLETQPPITGKGVPVEPGFSIDEFSASILTG) are extracellular. Residues 74-103 (KLTTVFLPVVYIIVFVIGLPSNGMALWIFL) form a helical membrane-spanning segment. Residues 104–110 (FRTKKKH) are Cytoplasmic-facing. Residues 111–139 (PAVIYMANLALADLLSVIWFPLKISYHLH) traverse the membrane as a helical segment. Topologically, residues 140–151 (GNNWVYGEALCK) are extracellular. An intrachain disulfide couples cysteine 150 to cysteine 228. A helical membrane pass occupies residues 152–179 (VLIGFFYGNMYCSILFMTCLSVQRYWVI). Residues 180–185 (VNPMGH) are Cytoplasmic-facing. Residues 186 to 213 (PRKKANIAVGVSLAIWLLIFLVTIPLYV) traverse the membrane as a helical segment. Over 214 to 237 (MKQTIYIPALNITTCHDVLPEEVL) the chain is Extracellular. An N-linked (GlcNAc...) asparagine glycan is attached at asparagine 224. The chain crosses the membrane as a helical span at residues 238-271 (VGDMFNYFLSLAIGVFLFPALLTASAYVLMIKTL). The Cytoplasmic portion of the chain corresponds to 272–279 (RSSAMDEH). Residues 280-319 (SEKKRQRAIRLIITVLAMYFICFAPSNLLLVVHYFLIKTQ) traverse the membrane as a helical segment. At 320 to 325 (RQSHVY) the chain is on the extracellular side. A helical transmembrane segment spans residues 326-349 (ALYLVALCLSTLNSCIDPFVYYFV). Topologically, residues 350–399 (SKDFRDHARNALLCRSVRTVNRMQISLSSNKFSRKSGSYSSSSTSVKTSY) are cytoplasmic. Residue cysteine 363 is the site of S-palmitoyl cysteine attachment.

Belongs to the G-protein coupled receptor 1 family. Interacts with TLR4, COPS5 and TMED2. Interacts with GNAQ, GNA11, GNA12, GNA13 and GNA14. Post-translationally, a proteolytic cleavage generates a new N-terminus that functions as a tethered ligand. Activating serine proteases include trypsin, mast cell tryptase, coagulation factors VII and Xa, myeloblastin/PRTN3 and membrane-type serine protease 1/ST14. Proposed subsequent cleavage by serine proteases is leading to receptor deactivation and include neutrophil elastase and cathepsin G. At least in part, implicated proteases are also shown to activate the receptor; the glycosylation status of the receptor is thought to contribute to the difference. N-glycosylated and sialylated. In terms of processing, multiple phosphorylated on serine and threonine residues in the cytoplasmic region upon receptor activation; required for receptor desensitization and recruitment of beta-arrestin. Post-translationally, monoubiquitinated by Cbl at the plasma membrane and in early endosomes; not required for receptor endocytosis but for translocation to late endosomes or lysosomes. Deubiquitination involves Stambp and Usp8; required for lysosomal trafficking and receptor degradation.

It localises to the cell membrane. Its function is as follows. Receptor for trypsin and trypsin-like enzymes coupled to G proteins. Its function is mediated through the activation of several signaling pathways including phospholipase C (PLC), intracellular calcium, mitogen-activated protein kinase (MAPK), I-kappaB kinase/NF-kappaB and Rho. Can also be transactivated by cleaved F2r/Par1. Involved in modulation of inflammatory responses and regulation of innate and adaptive immunity, and acts as a sensor for proteolytic enzymes generated during infection. Generally is promoting inflammation. Can signal synergistically with Tlr4 and probably Tlr2 in inflammatory responses and modulates Tlr3 signaling. Has a protective role in establishing the endothelial barrier; the activity involves coagulation factor X. Regulates endothelial cell barrier integrity during neutrophil extravasation, probably following proteolytic cleavage by PRTN3. Proposed to have a bronchoprotective role in airway epithelium, but also shown to compromise the airway epithelial barrier by interrupting E-cadherin adhesion. Involved in the regulation of vascular tone; activation results in hypotension presumably mediated by vasodilation. Associates with a subset of G proteins alpha subunits such as GNAQ, GNA11, GNA14, GNA12 and GNA13, but probably not with G(o)-alpha, G(i) subunit alpha-1 and G(i) subunit alpha-2. Believed to be a class B receptor which internalizes as a complex with arrestin and traffic with it to endosomal vesicles, presumably as desensitized receptor, for extended periods of time. Mediates inhibition of TNF-alpha stimulated JNK phosphorylation via coupling to GNAQ and GNA11; the function involves dissociation of Ripk1 and Tradd from Tnfr1. Mediates phosphorylation of nuclear factor NF-kappa-B RELA subunit at 'Ser-536'; the function involves Ikbkb and is predominantly independent of G proteins. Involved in cellular migration. Involved in cytoskeletal rearrangement and chemotaxis through beta-arrestin-promoted scaffolds; the function is independent of GNAQ and GNA11 and involves promotion of cofilin dephosphorylation and actin filament severing. Induces redistribution of Cops5 from the plasma membrane to the cytosol and activation of the JNK cascade is mediated by Cops5. Involved in the recruitment of leukocytes to the sites of inflammation and is the major PAR receptor capable of modulating eosinophil function such as pro-inflammatory cytokine secretion, superoxide production and degranulation. During inflammation promotes dendritic cell maturation, trafficking to the lymph nodes and subsequent T-cell activation. Involved in antimicrobial response of innate immune cells; activation enhances phagocytosis of Gram-positive and killing of Gram-negative bacteria. Acts synergistically with interferon-gamma in enhancing antiviral responses. Mediates activation of pro-inflammatory and pro-fibrotic responses in fibroblasts, triggered by coagulation factor Xa (F10). Probably mediates activation of barrier protective signaling responses in endothelial cells, triggered by coagulation factor Xa (F10). The protein is Proteinase-activated receptor 2 (F2rl1) of Mus musculus (Mouse).